The following is a 375-amino-acid chain: Trichodiene synthase (375 aa).

It belongs to the trichodiene synthase family.

The catalysed reaction is (2E,6E)-farnesyl diphosphate = trichodiene + diphosphate. Its pathway is sesquiterpene biosynthesis; trichothecene biosynthesis. In terms of biological role, TS is a member of the terpene cyclase group of enzymes. It catalyzes the isomerization and cyclization of farnesyl pyro-phosphate to form trichodiene, the first cyclic intermediate in the biosynthetic pathway for trichothecenes. It serves to branch trichothecene biosynthesis from the isoprenoid pathway. This chain is Trichodiene synthase (TRI5), found in Fusarium culmorum.